We begin with the raw amino-acid sequence, 624 residues long: PTS system mannitol-specific EIICBA component (624 aa).

The 324-residue stretch at 13-336 (FGRFLSNMVM…SFVIASFFLK (324 aa)) folds into the PTS EIIC type-2 domain. Helical transmembrane passes span 25–46 (IGAFIAWGFITALFIPTGWLPN), 51–71 (KLVGPMITYLLPLLIGYSGGK), 135–156 (SSGIIGMILAILFFWLIGPAVK), 166–186 (VDILVKAHLLPLTSIFVEPAK), 274–293 (VIAGGVSGVFTLVLFNAGLV), and 314–335 (VGVLASVAIAATVSFVIASFFL). Residues 372 to 463 (QKIFVACDAG…LVQDLSNTKV (92 aa)) form the PTS EIIB type-2 domain. The active-site Phosphocysteine intermediate; for EIIB activity is Cys-378. Cys-378 is subject to Phosphocysteine; by EIIA. The 143-residue stretch at 482–624 (FVLTEKQVFL…VEKVLALLKA (143 aa)) folds into the PTS EIIA type-2 domain. The Tele-phosphohistidine intermediate; for EIIA activity role is filled by His-542. Phosphohistidine; by HPr is present on His-542.

In terms of assembly, homodimer. An intramolecular phosphotransfer takes places between His-542 and Cys-378.

Its subcellular location is the cell inner membrane. It carries out the reaction D-mannitol(out) + N(pros)-phospho-L-histidyl-[protein] = D-mannitol 1-phosphate(in) + L-histidyl-[protein]. The phosphoenolpyruvate-dependent sugar phosphotransferase system (sugar PTS), a major carbohydrate active transport system, catalyzes the phosphorylation of incoming sugar substrates concomitantly with their translocation across the cell membrane. This system is involved in D-mannitol transport. This chain is PTS system mannitol-specific EIICBA component (mtlA), found in Pasteurella multocida (strain Pm70).